A 634-amino-acid polypeptide reads, in one-letter code: Mediator of RNA polymerase II transcription subunit 17 (634 aa).

Disordered regions lie at residues 51 to 73 (DKHKDPWAEDEESDGQSAADVDT) and 606 to 626 (DEKASRAQSWKPDSTTPGSPG). The span at 611-623 (RAQSWKPDSTTPG) shows a compositional bias: polar residues.

Belongs to the Mediator complex subunit 17 family. Component of the Mediator complex.

It is found in the nucleus. In terms of biological role, component of the Mediator complex, a coactivator involved in the regulated transcription of nearly all RNA polymerase II-dependent genes. Mediator functions as a bridge to convey information from gene-specific regulatory proteins to the basal RNA polymerase II transcription machinery. Mediator is recruited to promoters by direct interactions with regulatory proteins and serves as a scaffold for the assembly of a functional preinitiation complex with RNA polymerase II and the general transcription factors. This Aspergillus terreus (strain NIH 2624 / FGSC A1156) protein is Mediator of RNA polymerase II transcription subunit 17 (srb4).